A 513-amino-acid chain; its full sequence is ATP synthase subunit alpha (513 aa).

Residue 169-176 (GDRQTGKT) coordinates ATP.

It belongs to the ATPase alpha/beta chains family. F-type ATPases have 2 components, CF(1) - the catalytic core - and CF(0) - the membrane proton channel. CF(1) has five subunits: alpha(3), beta(3), gamma(1), delta(1), epsilon(1). CF(0) has three main subunits: a(1), b(2) and c(9-12). The alpha and beta chains form an alternating ring which encloses part of the gamma chain. CF(1) is attached to CF(0) by a central stalk formed by the gamma and epsilon chains, while a peripheral stalk is formed by the delta and b chains.

It is found in the cell inner membrane. It carries out the reaction ATP + H2O + 4 H(+)(in) = ADP + phosphate + 5 H(+)(out). Produces ATP from ADP in the presence of a proton gradient across the membrane. The alpha chain is a regulatory subunit. The chain is ATP synthase subunit alpha from Shewanella denitrificans (strain OS217 / ATCC BAA-1090 / DSM 15013).